The primary structure comprises 557 residues: MKSDAVTKGIQQAPHRSLFNALGLTKEELDKPLIGIVSSYNEIVPGHMNLDKIVEAVKLGVAMAGGTPIVFPAIAVCDGIAMGHIGMKYSLVTRDLIADSTEAMAMAHSFDALVMVPNCDKNVPGLLMAAARVNIPTIFVSGGPMLAGRVHGEKRSLSSMFEAVGAHAAGKMTEEEVEEFENKVCPTCGSCSGMYTANSMNCLTEALGMGLKGNGTIPAVYSERIRLAKHAGMKIMELLQNNIRPRDIMSEKAFLNALAVDMALGCSTNSMLHLPAIAHEAGVDLNVDIANEISAKTPNLCHLAPAGHTYMEDLNEAGGVYAVMNELDKKGLLYTDLITCTGKTIKENIEGCVNRDPDTIRPIENPYSQTGGIAVLKGNLAPDSGVVKRSAVAPEMMVHVGPARVFDCEEDAIDAIKSGKIVAGDVVVIRYEGPKGGPGMREMLNPTSAIAGMGLGSSVALITDGRFSGASRGASIGHVSPEAAVGGNIALIEEGDIIKIDIPNNSLNFVVSDEELERRRVNWSPREPKITTGYLARYTAMVTSGNRGAILEVPRVK.

Asp78 lines the Mg(2+) pocket. Cys119 is a binding site for [2Fe-2S] cluster. Residues Asp120 and Lys121 each contribute to the Mg(2+) site. Position 121 is an N6-carboxylysine (Lys121). Cys191 lines the [2Fe-2S] cluster pocket. Glu442 contributes to the Mg(2+) binding site. The active-site Proton acceptor is Ser468.

The protein belongs to the IlvD/Edd family. As to quaternary structure, homodimer. [2Fe-2S] cluster serves as cofactor. The cofactor is Mg(2+).

The enzyme catalyses (2R)-2,3-dihydroxy-3-methylbutanoate = 3-methyl-2-oxobutanoate + H2O. It catalyses the reaction (2R,3R)-2,3-dihydroxy-3-methylpentanoate = (S)-3-methyl-2-oxopentanoate + H2O. It functions in the pathway amino-acid biosynthesis; L-isoleucine biosynthesis; L-isoleucine from 2-oxobutanoate: step 3/4. Its pathway is amino-acid biosynthesis; L-valine biosynthesis; L-valine from pyruvate: step 3/4. Functions in the biosynthesis of branched-chain amino acids. Catalyzes the dehydration of (2R,3R)-2,3-dihydroxy-3-methylpentanoate (2,3-dihydroxy-3-methylvalerate) into 2-oxo-3-methylpentanoate (2-oxo-3-methylvalerate) and of (2R)-2,3-dihydroxy-3-methylbutanoate (2,3-dihydroxyisovalerate) into 2-oxo-3-methylbutanoate (2-oxoisovalerate), the penultimate precursor to L-isoleucine and L-valine, respectively. The protein is Dihydroxy-acid dehydratase of Lachnoclostridium phytofermentans (strain ATCC 700394 / DSM 18823 / ISDg) (Clostridium phytofermentans).